Here is a 349-residue protein sequence, read N- to C-terminus: Serine/threonine-protein kinase SRK2A (349 aa).

The 257-residue stretch at 12 to 268 (YELVKDIGSG…IQEIKNHEWF (257 aa)) folds into the Protein kinase domain. Residues 18–26 (IGSGNFGVA) and Lys-41 each bind ATP. Asp-131 functions as the Proton acceptor in the catalytic mechanism. The segment at 151–177 (DFGYSKSSLLHSQPKSTVGTPAYIAPE) is activation loop.

It belongs to the protein kinase superfamily. Ser/Thr protein kinase family.

The catalysed reaction is L-seryl-[protein] + ATP = O-phospho-L-seryl-[protein] + ADP + H(+). The enzyme catalyses L-threonyl-[protein] + ATP = O-phospho-L-threonyl-[protein] + ADP + H(+). Activated by osmotic stress and by abscisic acid (ABA). Activation by NaCl is dependent on ABA. In terms of biological role, involved in early responses to osmotic stress. The sequence is that of Serine/threonine-protein kinase SRK2A from Physcomitrium patens (Spreading-leaved earth moss).